A 410-amino-acid chain; its full sequence is Neuroserpin (410 aa).

The signal sequence occupies residues 1–16 (MYFLGLLSLLVLPSKA). 2 N-linked (GlcNAc...) asparagine glycosylation sites follow: Asn157 and Asn401.

This sequence belongs to the serpin family. In terms of tissue distribution, detected in embryonic ocular vitreous fluid (at protein level). In the embryo present in retina, brain, cerebellum and spinal cord. In adult, predominantly expressed in the brain.

It is found in the secreted. It localises to the cytoplasmic vesicle. Its subcellular location is the secretory vesicle lumen. The protein resides in the perikaryon. In terms of biological role, serine protease inhibitor that inhibits plasminogen activators and plasmin but not thrombin. May be involved in the formation or reorganization of synaptic connections as well as for synaptic plasticity in the adult nervous system. May protect neurons from cell damage by tissue-type plasminogen activator. The polypeptide is Neuroserpin (SERPINI1) (Gallus gallus (Chicken)).